The primary structure comprises 1091 residues: Constitutive coactivator of PPAR-gamma-like protein 2 (1091 aa).

A compositionally biased stretch (low complexity) spans 35 to 53; it reads QQQHLHRQLPPAALAPGAP. Disordered regions lie at residues 35-105, 503-575, 966-1010, and 1037-1077; these read QQQH…HPPP, NCLT…SEPH, SRSS…QGSS, and VEEK…KNHV. At Arg-57 the chain carries Omega-N-methylarginine. Basic residues predominate over residues 82-95; that stretch reads SRHHHPAHHFHHHG. Polar residues predominate over residues 532 to 544; sequence GSEQITEAVQQQP. Residues 966-976 show a composition bias toward low complexity; that stretch reads SRSSRSRGSFG. Arg-972 is modified (omega-N-methylarginine). Positions 1062-1077 are enriched in basic and acidic residues; it reads SDDHCLPVKNGEKNHV.

It belongs to the constitutive coactivator of PPAR-gamma family.

The polypeptide is Constitutive coactivator of PPAR-gamma-like protein 2 (Fam120c) (Mus musculus (Mouse)).